Consider the following 241-residue polypeptide: Small ribosomal subunit protein uS2 (241 aa).

Belongs to the universal ribosomal protein uS2 family.

This chain is Small ribosomal subunit protein uS2, found in Cronobacter sakazakii (strain ATCC BAA-894) (Enterobacter sakazakii).